Reading from the N-terminus, the 468-residue chain is Argininosuccinate lyase (468 aa).

This sequence belongs to the lyase 1 family. Argininosuccinate lyase subfamily.

The protein resides in the cytoplasm. The catalysed reaction is 2-(N(omega)-L-arginino)succinate = fumarate + L-arginine. Its pathway is amino-acid biosynthesis; L-arginine biosynthesis; L-arginine from L-ornithine and carbamoyl phosphate: step 3/3. The chain is Argininosuccinate lyase from Paraburkholderia phymatum (strain DSM 17167 / CIP 108236 / LMG 21445 / STM815) (Burkholderia phymatum).